The following is a 185-amino-acid chain: Large ribosomal subunit protein uL16m (185 aa).

This sequence belongs to the universal ribosomal protein uL16 family.

The protein resides in the mitochondrion. The polypeptide is Large ribosomal subunit protein uL16m (RPL16) (Zea mays (Maize)).